The primary structure comprises 339 residues: Serpentine receptor class alpha-20 (339 aa).

A run of 6 helical transmembrane segments spans residues 30–50 (VSFV…VLAI), 113–132 (LYFY…SLTF), 151–171 (VSIS…YFGL), 199–219 (FRTT…YLNV), 249–269 (CILI…VNYI), and 284–304 (IAPF…VIYF).

It belongs to the nematode receptor-like protein sra family.

Its subcellular location is the membrane. In Caenorhabditis elegans, this protein is Serpentine receptor class alpha-20 (sra-20).